Reading from the N-terminus, the 535-residue chain is Peptide chain release factor 3 (535 aa).

Positions 8–276 (ARRRTFAIIS…ALVEQAPPPG (269 aa)) constitute a tr-type G domain. GTP is bound by residues 17-24 (SHPDAGKT), 85-89 (DTPGH), and 139-142 (NKMD).

It belongs to the TRAFAC class translation factor GTPase superfamily. Classic translation factor GTPase family. PrfC subfamily.

It localises to the cytoplasm. Its function is as follows. Increases the formation of ribosomal termination complexes and stimulates activities of RF-1 and RF-2. It binds guanine nucleotides and has strong preference for UGA stop codons. It may interact directly with the ribosome. The stimulation of RF-1 and RF-2 is significantly reduced by GTP and GDP, but not by GMP. The protein is Peptide chain release factor 3 of Bordetella petrii (strain ATCC BAA-461 / DSM 12804 / CCUG 43448).